The sequence spans 206 residues: MKRSKSSRRWLDEHVNDPFVKRAQKDGLRSRSSYKLIELNEKDKLIRPGMLVMDLGSAPGGWSQVAGGIVGEKGRVLATDILPMGGLDNVDFVQGDFTEDAVFQQILDMLDGRQPDLIVSDIAPNISGVAAADQAASMYLVELTLDMVRQVLKPGGNYVVKVFQGEGSDEFLKDVRSSFEKVVIRKPEASRPRSREVYLVAKGFKG.

S-adenosyl-L-methionine is bound by residues G60, W62, D80, D96, and D121. The active-site Proton acceptor is the K161.

This sequence belongs to the class I-like SAM-binding methyltransferase superfamily. RNA methyltransferase RlmE family.

The protein resides in the cytoplasm. It catalyses the reaction uridine(2552) in 23S rRNA + S-adenosyl-L-methionine = 2'-O-methyluridine(2552) in 23S rRNA + S-adenosyl-L-homocysteine + H(+). Specifically methylates the uridine in position 2552 of 23S rRNA at the 2'-O position of the ribose in the fully assembled 50S ribosomal subunit. This Stutzerimonas stutzeri (strain A1501) (Pseudomonas stutzeri) protein is Ribosomal RNA large subunit methyltransferase E.